Here is a 117-residue protein sequence, read N- to C-terminus: Ribosome-binding factor A (117 aa).

This sequence belongs to the RbfA family. In terms of assembly, monomer. Binds 30S ribosomal subunits, but not 50S ribosomal subunits or 70S ribosomes.

The protein localises to the cytoplasm. Functionally, one of several proteins that assist in the late maturation steps of the functional core of the 30S ribosomal subunit. Associates with free 30S ribosomal subunits (but not with 30S subunits that are part of 70S ribosomes or polysomes). Required for efficient processing of 16S rRNA. May interact with the 5'-terminal helix region of 16S rRNA. The sequence is that of Ribosome-binding factor A from Nitrosomonas eutropha (strain DSM 101675 / C91 / Nm57).